The primary structure comprises 157 residues: Eukaryotic translation initiation factor 5A-1 (157 aa).

Hypusine is present on Lys52. A phosphoserine mark is found at Ser75 and Ser77. Position 78 is a phosphothreonine (Thr78).

It belongs to the eIF-5A family. In terms of processing, lys-52 undergoes hypusination, a unique post-translational modification that consists in the addition of a butylamino group from spermidine to lysine side chain, leading to the formation of the unusual amino acid hypusine. eIF-5As are the only known proteins to undergo this modification, which is essential for their function.

Its subcellular location is the cytoplasm. Its function is as follows. Translation factor that promotes translation elongation and termination, particularly upon ribosome stalling at specific amino acid sequence contexts. Binds between the exit (E) and peptidyl (P) site of the ribosome and promotes rescue of stalled ribosome: specifically required for efficient translation of polyproline-containing peptides as well as other motifs that stall the ribosome. Acts as a ribosome quality control (RQC) cofactor by joining the RQC complex to facilitate peptidyl transfer during CAT tailing step. The sequence is that of Eukaryotic translation initiation factor 5A-1 (tif51a) from Schizosaccharomyces pombe (strain 972 / ATCC 24843) (Fission yeast).